The sequence spans 190 residues: RNA pyrophosphohydrolase (190 aa).

The Nudix hydrolase domain maps to 6–149 (GYRPNVGIVL…KRSVYARALC (144 aa)). A Nudix box motif is present at residues 38-59 (GGMHSDETPVEAMYRELNEETG).

The protein belongs to the Nudix hydrolase family. RppH subfamily. The cofactor is a divalent metal cation.

Its function is as follows. Accelerates the degradation of transcripts by removing pyrophosphate from the 5'-end of triphosphorylated RNA, leading to a more labile monophosphorylated state that can stimulate subsequent ribonuclease cleavage. This is RNA pyrophosphohydrolase from Xylella fastidiosa (strain Temecula1 / ATCC 700964).